Reading from the N-terminus, the 367-residue chain is DNA replication and repair protein RecF (367 aa).

An ATP-binding site is contributed by 30 to 37; sequence GANGSGKT.

This sequence belongs to the RecF family.

Its subcellular location is the cytoplasm. Functionally, the RecF protein is involved in DNA metabolism; it is required for DNA replication and normal SOS inducibility. RecF binds preferentially to single-stranded, linear DNA. It also seems to bind ATP. In Pseudomonas entomophila (strain L48), this protein is DNA replication and repair protein RecF.